Consider the following 227-residue polypeptide: Cytochrome c oxidase subunit 2 (227 aa).

Topologically, residues 1 to 14 (MAYPLQLGFQDATS) are mitochondrial intermembrane. The helical transmembrane segment at 15–45 (PVMEELLHFHDHTLMIIFLISSLVLYIIMLM) threads the bilayer. At 46-59 (LTTKLVHTNMMNVQ) the chain is on the mitochondrial matrix side. The helical transmembrane segment at 60-87 (EMEMIWTILPAIILILIALPSLHTLYMM) threads the bilayer. Topologically, residues 88–227 (DEINNPLLTI…YFESWSASLA (140 aa)) are mitochondrial intermembrane. Positions 161, 196, 198, 200, 204, and 207 each coordinate Cu cation. Glu-198 provides a ligand contact to Mg(2+). Tyr-218 carries the phosphotyrosine modification.

This sequence belongs to the cytochrome c oxidase subunit 2 family. Component of the cytochrome c oxidase (complex IV, CIV), a multisubunit enzyme composed of 14 subunits. The complex is composed of a catalytic core of 3 subunits MT-CO1, MT-CO2 and MT-CO3, encoded in the mitochondrial DNA, and 11 supernumerary subunits COX4I, COX5A, COX5B, COX6A, COX6B, COX6C, COX7A, COX7B, COX7C, COX8 and NDUFA4, which are encoded in the nuclear genome. The complex exists as a monomer or a dimer and forms supercomplexes (SCs) in the inner mitochondrial membrane with NADH-ubiquinone oxidoreductase (complex I, CI) and ubiquinol-cytochrome c oxidoreductase (cytochrome b-c1 complex, complex III, CIII), resulting in different assemblies (supercomplex SCI(1)III(2)IV(1) and megacomplex MCI(2)III(2)IV(2)). Found in a complex with TMEM177, COA6, COX18, COX20, SCO1 and SCO2. Interacts with TMEM177 in a COX20-dependent manner. Interacts with COX20. Interacts with COX16. It depends on Cu cation as a cofactor.

The protein localises to the mitochondrion inner membrane. The enzyme catalyses 4 Fe(II)-[cytochrome c] + O2 + 8 H(+)(in) = 4 Fe(III)-[cytochrome c] + 2 H2O + 4 H(+)(out). Functionally, component of the cytochrome c oxidase, the last enzyme in the mitochondrial electron transport chain which drives oxidative phosphorylation. The respiratory chain contains 3 multisubunit complexes succinate dehydrogenase (complex II, CII), ubiquinol-cytochrome c oxidoreductase (cytochrome b-c1 complex, complex III, CIII) and cytochrome c oxidase (complex IV, CIV), that cooperate to transfer electrons derived from NADH and succinate to molecular oxygen, creating an electrochemical gradient over the inner membrane that drives transmembrane transport and the ATP synthase. Cytochrome c oxidase is the component of the respiratory chain that catalyzes the reduction of oxygen to water. Electrons originating from reduced cytochrome c in the intermembrane space (IMS) are transferred via the dinuclear copper A center (CU(A)) of subunit 2 and heme A of subunit 1 to the active site in subunit 1, a binuclear center (BNC) formed by heme A3 and copper B (CU(B)). The BNC reduces molecular oxygen to 2 water molecules using 4 electrons from cytochrome c in the IMS and 4 protons from the mitochondrial matrix. This chain is Cytochrome c oxidase subunit 2 (MT-CO2), found in Mammuthus primigenius (Siberian woolly mammoth).